A 119-amino-acid chain; its full sequence is Ribonuclease P protein component (119 aa).

Belongs to the RnpA family. As to quaternary structure, consists of a catalytic RNA component (M1 or rnpB) and a protein subunit.

The enzyme catalyses Endonucleolytic cleavage of RNA, removing 5'-extranucleotides from tRNA precursor.. In terms of biological role, RNaseP catalyzes the removal of the 5'-leader sequence from pre-tRNA to produce the mature 5'-terminus. It can also cleave other RNA substrates such as 4.5S RNA. The protein component plays an auxiliary but essential role in vivo by binding to the 5'-leader sequence and broadening the substrate specificity of the ribozyme. This chain is Ribonuclease P protein component, found in Corynebacterium diphtheriae (strain ATCC 700971 / NCTC 13129 / Biotype gravis).